The sequence spans 472 residues: Alanine--anticapsin ligase (472 aa).

Mg(2+) is bound at residue Glu109. ATP-binding residues include Lys138 and Lys178. An ATP-grasp domain is found at 142-355 (RAAFNRAGVK…MAQLLLDVLC (214 aa)). Leu182 is a binding site for Mg(2+). ATP is bound by residues 184–185 (SS), 226–229 (EEFL), and Gln268. Substrate is bound by residues Glu273 and 309-311 (HTE). 2 residues coordinate Mg(2+): Glu311 and Glu324. Substrate is bound at residue 328 to 331 (RFAG).

Monomer or homodimer. Requires Mg(2+) as cofactor.

The enzyme catalyses L-anticapsin + L-alanine + ATP = bacilysin + ADP + phosphate + H(+). The protein operates within antibiotic biosynthesis; bacilysin biosynthesis. In terms of biological role, part of the bacABCDEFG operon responsible for the biosynthesis of bacilysin, an irreversible inactivator of the glutaminase domain of glucosamine synthetase. Catalyzes the formation of alpha-dipeptides from various L-amino acids in the presence of ATP. In vivo catalyzes the ligation of L-alanine and L-anticapsin (epoxycyclohexanonyl-Ala) to produce the final bacilysin antibiotic (L-Ala-L-4S-cyclohexenonyl-Ala dipeptide). This is Alanine--anticapsin ligase from Bacillus amyloliquefaciens (Bacillus velezensis).